Reading from the N-terminus, the 115-residue chain is Large ribosomal subunit protein uL18 (115 aa).

Belongs to the universal ribosomal protein uL18 family. Part of the 50S ribosomal subunit; part of the 5S rRNA/L5/L18/L25 subcomplex. Contacts the 5S and 23S rRNAs.

In terms of biological role, this is one of the proteins that bind and probably mediate the attachment of the 5S RNA into the large ribosomal subunit, where it forms part of the central protuberance. This is Large ribosomal subunit protein uL18 from Baumannia cicadellinicola subsp. Homalodisca coagulata.